The sequence spans 99 residues: Antitoxin VapB47 (99 aa).

It belongs to the phD/YefM antitoxin family.

Antitoxin component of a type II toxin-antitoxin (TA) system. In Mycobacterium tuberculosis (strain CDC 1551 / Oshkosh), this protein is Antitoxin VapB47 (vapB47).